The chain runs to 414 residues: Serine hydroxymethyltransferase (414 aa).

Residues Leu-121 and 125-127 (GHL) each bind (6S)-5,6,7,8-tetrahydrofolate. Lys-229 carries the post-translational modification N6-(pyridoxal phosphate)lysine.

The protein belongs to the SHMT family. In terms of assembly, homodimer. It depends on pyridoxal 5'-phosphate as a cofactor.

The protein localises to the cytoplasm. The catalysed reaction is (6R)-5,10-methylene-5,6,7,8-tetrahydrofolate + glycine + H2O = (6S)-5,6,7,8-tetrahydrofolate + L-serine. The protein operates within one-carbon metabolism; tetrahydrofolate interconversion. Its pathway is amino-acid biosynthesis; glycine biosynthesis; glycine from L-serine: step 1/1. Its function is as follows. Catalyzes the reversible interconversion of serine and glycine with tetrahydrofolate (THF) serving as the one-carbon carrier. This reaction serves as the major source of one-carbon groups required for the biosynthesis of purines, thymidylate, methionine, and other important biomolecules. Also exhibits THF-independent aldolase activity toward beta-hydroxyamino acids, producing glycine and aldehydes, via a retro-aldol mechanism. This Polynucleobacter asymbioticus (strain DSM 18221 / CIP 109841 / QLW-P1DMWA-1) (Polynucleobacter necessarius subsp. asymbioticus) protein is Serine hydroxymethyltransferase.